Reading from the N-terminus, the 434-residue chain is Probable glucuronosyltransferase Os02g0520750 (434 aa).

Topologically, residues 1–10 (MVGARAGRVP) are cytoplasmic. A helical; Signal-anchor for type II membrane protein transmembrane segment spans residues 11 to 31 (AAAAAAAAVLIVAACVFSSLA). At 32-434 (GAAAAAEVVG…GPVADLKPWK (403 aa)) the chain is on the lumenal side. N-linked (GlcNAc...) asparagine glycans are attached at residues Asn-160 and Asn-421.

This sequence belongs to the glycosyltransferase 47 family.

The protein localises to the golgi apparatus membrane. Involved in the synthesis of glucuronoxylan hemicellulose in secondary cell walls. This Oryza sativa subsp. japonica (Rice) protein is Probable glucuronosyltransferase Os02g0520750.